The following is a 343-amino-acid chain: Small ribosomal subunit biogenesis GTPase RsgA (343 aa).

One can recognise a CP-type G domain in the interval 116–275; it reads RGQLKPVAAN…LIDSPGIREF (160 aa). Residues 163–166 and 217–225 each bind GTP; these read NKAD and GQSGVGKSS. Positions 299, 304, 306, and 312 each coordinate Zn(2+).

This sequence belongs to the TRAFAC class YlqF/YawG GTPase family. RsgA subfamily. Monomer. Associates with 30S ribosomal subunit, binds 16S rRNA. Zn(2+) is required as a cofactor.

It localises to the cytoplasm. One of several proteins that assist in the late maturation steps of the functional core of the 30S ribosomal subunit. Helps release RbfA from mature subunits. May play a role in the assembly of ribosomal proteins into the subunit. Circularly permuted GTPase that catalyzes slow GTP hydrolysis, GTPase activity is stimulated by the 30S ribosomal subunit. This Pseudomonas savastanoi pv. phaseolicola (strain 1448A / Race 6) (Pseudomonas syringae pv. phaseolicola (strain 1448A / Race 6)) protein is Small ribosomal subunit biogenesis GTPase RsgA.